Reading from the N-terminus, the 671-residue chain is Peroxisomal membrane protein PEX17 (671 aa).

8 helical membrane-spanning segments follow: residues 127-147 (LPLL…GPTL), 187-207 (VPVL…DVAI), 212-232 (FLQV…GTAL), 258-278 (VVAL…HVDI), 318-338 (YLKW…NMLL), 372-392 (FAAY…EYAP), 475-495 (LVEA…NAVV), and 504-524 (MGGV…VLAI).

It is found in the peroxisome membrane. Involved in peroxisome biosynthesis. Required for the import of a subset of matrix proteins into peroxisomes. This is Peroxisomal membrane protein PEX17 (PEX17) from Yarrowia lipolytica (strain CLIB 122 / E 150) (Yeast).